An 876-amino-acid polypeptide reads, in one-letter code: Alanine--tRNA ligase (876 aa).

His568, His572, Cys669, and His673 together coordinate Zn(2+).

Belongs to the class-II aminoacyl-tRNA synthetase family. Zn(2+) serves as cofactor.

It localises to the cytoplasm. The enzyme catalyses tRNA(Ala) + L-alanine + ATP = L-alanyl-tRNA(Ala) + AMP + diphosphate. Functionally, catalyzes the attachment of alanine to tRNA(Ala) in a two-step reaction: alanine is first activated by ATP to form Ala-AMP and then transferred to the acceptor end of tRNA(Ala). Also edits incorrectly charged Ser-tRNA(Ala) and Gly-tRNA(Ala) via its editing domain. The chain is Alanine--tRNA ligase from Sulfurihydrogenibium sp. (strain YO3AOP1).